The sequence spans 164 residues: Sperm axonemal maintenance protein CFAP97D1 (164 aa).

Positions 61–88 form a coiled coil; the sequence is LSKIQGEQKRIDKIEYENRQLCQKIANA.

It belongs to the CFAP97 family. Expressed exclusively in testis.

Its function is as follows. Required for male fertility through its role in axonemal doublet stabilization which is essential for sperm motility and fertilization. This Mus musculus (Mouse) protein is Sperm axonemal maintenance protein CFAP97D1 (Cfap97d1).